The primary structure comprises 166 residues: Large ribosomal subunit protein uL10 (166 aa).

The protein belongs to the universal ribosomal protein uL10 family. As to quaternary structure, part of the ribosomal stalk of the 50S ribosomal subunit. The N-terminus interacts with L11 and the large rRNA to form the base of the stalk. The C-terminus forms an elongated spine to which L12 dimers bind in a sequential fashion forming a multimeric L10(L12)X complex.

Its function is as follows. Forms part of the ribosomal stalk, playing a central role in the interaction of the ribosome with GTP-bound translation factors. This chain is Large ribosomal subunit protein uL10, found in Pseudomonas fluorescens (strain ATCC BAA-477 / NRRL B-23932 / Pf-5).